The primary structure comprises 1120 residues: Phosphatidylinositide phosphatase SAC2 (1120 aa).

Residues 167 to 518 (YKIFMDSDSF…GDTISRQYAG (352 aa)) form the SAC domain. The region spanning 593–760 (RGAQEQVSLL…RHSKPHEDIM (168 aa)) is the hSac2 domain. 2 disordered regions span residues 837 to 881 (SSLE…SREN) and 979 to 1008 (PAPKPQGPQVPLAPDAKLGSSHSQNQLPRP). Over residues 851-860 (LKDHGPHSEE) the composition is skewed to basic and acidic residues. 2 stretches are compositionally biased toward polar residues: residues 864 to 879 (DSDSYNSDEQPCSGSR) and 998 to 1007 (SSHSQNQLPR).

The protein resides in the membrane. It localises to the clathrin-coated pit. Its subcellular location is the early endosome. The protein localises to the recycling endosome. The catalysed reaction is a myo-inositol phosphate + H2O = myo-inositol + phosphate. In terms of biological role, inositol 4-phosphatase which mainly acts on phosphatidylinositol 4-phosphate. May be functionally linked to OCRL, which converts phosphatidylinositol 4,5-bisphosphate to phosphatidylinositol, for a sequential dephosphorylation of phosphatidylinositol 4,5-bisphosphate at the 5 and 4 position of inositol, thus playing an important role in the endocytic recycling. The chain is Phosphatidylinositide phosphatase SAC2 from Danio rerio (Zebrafish).